The sequence spans 138 residues: Large ribosomal subunit protein uL16 (138 aa).

The protein belongs to the universal ribosomal protein uL16 family. Part of the 50S ribosomal subunit.

Binds 23S rRNA and is also seen to make contacts with the A and possibly P site tRNAs. The sequence is that of Large ribosomal subunit protein uL16 from Ureaplasma urealyticum serovar 10 (strain ATCC 33699 / Western).